Reading from the N-terminus, the 263-residue chain is 3-deoxy-manno-octulosonate cytidylyltransferase (263 aa).

This sequence belongs to the KdsB family.

The protein resides in the cytoplasm. The enzyme catalyses 3-deoxy-alpha-D-manno-oct-2-ulosonate + CTP = CMP-3-deoxy-beta-D-manno-octulosonate + diphosphate. The protein operates within nucleotide-sugar biosynthesis; CMP-3-deoxy-D-manno-octulosonate biosynthesis; CMP-3-deoxy-D-manno-octulosonate from 3-deoxy-D-manno-octulosonate and CTP: step 1/1. It participates in bacterial outer membrane biogenesis; lipopolysaccharide biosynthesis. In terms of biological role, activates KDO (a required 8-carbon sugar) for incorporation into bacterial lipopolysaccharide in Gram-negative bacteria. In Burkholderia thailandensis (strain ATCC 700388 / DSM 13276 / CCUG 48851 / CIP 106301 / E264), this protein is 3-deoxy-manno-octulosonate cytidylyltransferase.